We begin with the raw amino-acid sequence, 484 residues long: Glutamate--tRNA ligase (484 aa).

The 'HIGH' region motif lies at 11–21 (PSPTGLLHIGN). Positions 255 to 259 (KLSKR) match the 'KMSKS' region motif. Lys-258 provides a ligand contact to ATP.

It belongs to the class-I aminoacyl-tRNA synthetase family. Glutamate--tRNA ligase type 1 subfamily. In terms of assembly, monomer.

Its subcellular location is the cytoplasm. It carries out the reaction tRNA(Glu) + L-glutamate + ATP = L-glutamyl-tRNA(Glu) + AMP + diphosphate. Catalyzes the attachment of glutamate to tRNA(Glu) in a two-step reaction: glutamate is first activated by ATP to form Glu-AMP and then transferred to the acceptor end of tRNA(Glu). In Streptococcus agalactiae serotype Ia (strain ATCC 27591 / A909 / CDC SS700), this protein is Glutamate--tRNA ligase.